The chain runs to 117 residues: Large ribosomal subunit protein uL18 (117 aa).

This sequence belongs to the universal ribosomal protein uL18 family. In terms of assembly, part of the 50S ribosomal subunit; part of the 5S rRNA/L5/L18/L25 subcomplex. Contacts the 5S and 23S rRNAs.

Functionally, this is one of the proteins that bind and probably mediate the attachment of the 5S RNA into the large ribosomal subunit, where it forms part of the central protuberance. This chain is Large ribosomal subunit protein uL18, found in Neisseria gonorrhoeae (strain ATCC 700825 / FA 1090).